The primary structure comprises 85 residues: Sec-independent protein translocase protein TatA (85 aa).

Residues 1–21 (MGSFSIWHWLIVLLIIMMVFG) form a helical membrane-spanning segment. The segment covering 39 to 51 (FKEGMREGSEDKP) has biased composition (basic and acidic residues). The interval 39-85 (FKEGMREGSEDKPAGSQQGQQAAGQPPRELHDSTTIDVEARDKSKQG) is disordered. The span at 52–65 (AGSQQGQQAAGQPP) shows a compositional bias: low complexity. Residues 66 to 85 (RELHDSTTIDVEARDKSKQG) are compositionally biased toward basic and acidic residues.

The protein belongs to the TatA/E family. The Tat system comprises two distinct complexes: a TatABC complex, containing multiple copies of TatA, TatB and TatC subunits, and a separate TatA complex, containing only TatA subunits. Substrates initially bind to the TatABC complex, which probably triggers association of the separate TatA complex to form the active translocon.

It localises to the cell inner membrane. Part of the twin-arginine translocation (Tat) system that transports large folded proteins containing a characteristic twin-arginine motif in their signal peptide across membranes. TatA could form the protein-conducting channel of the Tat system. This chain is Sec-independent protein translocase protein TatA, found in Ralstonia nicotianae (strain ATCC BAA-1114 / GMI1000) (Ralstonia solanacearum).